Consider the following 128-residue polypeptide: Group 2 truncated hemoglobin GlbO (128 aa).

A cross-link (isodityrosine (Tyr-Tyr)) is located at residues Tyr23–Tyr36. Residue Tyr36 is modified to 3',4'-dihydroxyphenylalanine. His75 contributes to the heme binding site.

It belongs to the truncated hemoglobin family. Group II subfamily. In terms of assembly, homododecamer. Requires heme as cofactor. Post-translationally, contains L-DOPA (3',4'-dihydroxyphenylalanine).

The protein is Group 2 truncated hemoglobin GlbO (glbO) of Mycobacterium bovis (strain ATCC BAA-935 / AF2122/97).